The chain runs to 688 residues: Glycine--tRNA ligase beta subunit (688 aa).

Belongs to the class-II aminoacyl-tRNA synthetase family. In terms of assembly, tetramer of two alpha and two beta subunits.

Its subcellular location is the cytoplasm. It catalyses the reaction tRNA(Gly) + glycine + ATP = glycyl-tRNA(Gly) + AMP + diphosphate. This chain is Glycine--tRNA ligase beta subunit, found in Actinobacillus pleuropneumoniae serotype 7 (strain AP76).